The sequence spans 248 residues: Type III pantothenate kinase (248 aa).

8-15 is an ATP binding site; that stretch reads DAGNTRTK. Substrate-binding positions include tyrosine 87 and 94-97; that span reads GVDR. Aspartate 96 acts as the Proton acceptor in catalysis. Residue threonine 119 coordinates ATP. Threonine 173 is a binding site for substrate.

Belongs to the type III pantothenate kinase family. In terms of assembly, homodimer. It depends on NH4(+) as a cofactor. K(+) is required as a cofactor.

The protein localises to the cytoplasm. The catalysed reaction is (R)-pantothenate + ATP = (R)-4'-phosphopantothenate + ADP + H(+). The protein operates within cofactor biosynthesis; coenzyme A biosynthesis; CoA from (R)-pantothenate: step 1/5. Catalyzes the phosphorylation of pantothenate (Pan), the first step in CoA biosynthesis. This chain is Type III pantothenate kinase, found in Methylobacillus flagellatus (strain ATCC 51484 / DSM 6875 / VKM B-1610 / KT).